A 227-amino-acid polypeptide reads, in one-letter code: Eukaryotic translation initiation factor 4E-1 (227 aa).

The disordered stretch occupies residues 1–52 (MAEEHETRPPSAGRPPSSGRGRADDADEREEGEIADDDSGHAPPQANPAAPH). The span at 9–20 (PPSAGRPPSSGR) shows a compositional bias: low complexity. Residues 25–37 (DADEREEGEIADD) are compositionally biased toward acidic residues. EIF4G-binding regions lie at residues 52–55 (HPLE) and 62–98 (FDNP…NNIH). MRNA-binding positions include 70–75 (KQATWG), lysine 102, and 120–121 (WE). A disulfide bond links cysteine 125 and cysteine 163. The EIF4G-binding stretch occupies residues 146 to 155 (HTLLAMIGEQ). MRNA-binding positions include 170–175 (RGKQER) and 215–219 (KKMDK).

This sequence belongs to the eukaryotic initiation factor 4E family. EIF4F is a multi-subunit complex, the composition of which varies with external and internal environmental conditions. It is composed of at least EIF4A, EIF4E and EIF4G. EIF4E is also known to interact with other partners. In higher plants two isoforms of EIF4F have been identified, named isoform EIF4F and isoform EIF(iso)4F. Isoform EIF4F has subunits p220 and p26, whereas isoform EIF(iso)4F has subunits p82 and p28. Post-translationally, according to the redox status, the Cys-125-Cys-163 disulfide bridge may have a role in regulating protein function by affecting its ability to bind capped mRNA.

It localises to the nucleus. Its subcellular location is the cytoplasm. Its function is as follows. Component of the protein complex eIF4F, which is involved in the recognition of the mRNA cap, ATP-dependent unwinding of 5'-terminal secondary structure and recruitment of mRNA to the ribosome. Recognizes and binds the 7-methylguanosine-containing mRNA cap during an early step in the initiation of protein synthesis and facilitates ribosome binding by inducing the unwinding of the mRNAs secondary structures. This chain is Eukaryotic translation initiation factor 4E-1, found in Oryza sativa subsp. japonica (Rice).